Here is a 440-residue protein sequence, read N- to C-terminus: MKMTGWKKKLCRGHHLWALGCYSLLAVVALRLSLRLKCDVDSLDLESRDFQSQRCRDVLYKNLKLPAKRSINCSGITRGDQEAVVQALLDNLEVKKKRLPFTDTYYLNITRDCEQFKAQRKFIQFPLSKEELDFPIAYSMVVHEKIENFERLLRAVYAPQNIYCVHVDVKSPETFKEAVKAIISCFPNVFMASKLVPVVYASWSRVQADLNCMEDLLQSSVPWKYLLNTCGTDFPIKTNAEMVLALKMLNGKNSMESEIPSEYKKNRWKYRYEVTDRLYLTSKMKDPPPDNLPMFTGNAYFVASRAFVQHVLENPKSQRLIEWVKDTYSPDEHLWATLQRAPWMPGSVPYHPKYHISDMTAIARLVKWQGHEGDVSMGAPYAPCSGIHQRAICIYGAGDLHWILQNHHLLANKFDPRVDDNVLQCLEEYLRHKAIYGTEL.

Over 1–12 (MKMTGWKKKLCR) the chain is Cytoplasmic. Residues 13 to 30 (GHHLWALGCYSLLAVVAL) traverse the membrane as a helical; Signal-anchor for type II membrane protein segment. Residues 31–440 (RLSLRLKCDV…RHKAIYGTEL (410 aa)) lie on the Lumenal side of the membrane. 4 cysteine pairs are disulfide-bonded: Cys73–Cys230, Cys164–Cys384, Cys185–Cys212, and Cys393–Cys425. Asn108 carries an N-linked (GlcNAc...) asparagine glycan.

Belongs to the glycosyltransferase 14 family. N-glycosylated.

The protein localises to the golgi apparatus membrane. It catalyses the reaction a 3-O-[beta-D-galactosyl-(1-&gt;3)-N-acetyl-alpha-D-galactosaminyl]-L-seryl-[protein] + UDP-N-acetyl-alpha-D-glucosamine = 3-O-{beta-D-galactosyl-(1-&gt;3)-[N-acetyl-beta-D-glucosaminyl-(1-&gt;6)]-N-acetyl-alpha-D-galactosaminyl}-L-seryl-[protein] + UDP + H(+). The enzyme catalyses a 3-O-[beta-D-galactosyl-(1-&gt;3)-N-acetyl-alpha-D-galactosaminyl]-L-threonyl-[protein] + UDP-N-acetyl-alpha-D-glucosamine = a 3-O-{beta-D-galactosyl-(1-&gt;3)-[N-acetyl-beta-D-glucosaminyl-(1-&gt;6)]-N-acetyl-alpha-D-galactosaminyl}-L-threonyl-[protein] + UDP + H(+). The catalysed reaction is a beta-D-Gal-(1-&gt;4)-beta-D-GlcNAc-(1-&gt;3)-beta-D-Gal-(1-&gt;4)-beta-D-GlcNAc derivative + UDP-N-acetyl-alpha-D-glucosamine = a beta-D-Gal-(1-&gt;4)-beta-D-GlcNAc-(1-&gt;3)-[beta-D-GlcNAc-(1-&gt;6)]-beta-D-Gal-(1-&gt;4)-N-acetyl-beta-D-glucosaminyl derivative + UDP + H(+). It carries out the reaction 3-O-[N-acetyl-beta-D-glucosaminyl-(1-&gt;3)-N-acetyl-alpha-D-galactosaminyl]-L-seryl-[protein] + UDP-N-acetyl-alpha-D-glucosamine = 3-O-[N-acetyl-beta-D-glucosaminyl-(1-&gt;3)-[N-acetyl-beta-D-glucosaminyl-(1-&gt;6)]-N-acetyl-alpha-D-galactosaminyl]-L-seryl-[protein] + UDP + H(+). It catalyses the reaction a 3-O-[N-acetyl-beta-D-glucosaminyl-(1-&gt;3)-N-acetyl-alpha-D-galactosaminyl]-L-threonyl-[protein] + UDP-N-acetyl-alpha-D-glucosamine = 3-O-[N-acetyl-beta-D-glucosaminyl-(1-&gt;3)-[N-acetyl-beta-D-glucosaminyl-(1-&gt;6)]-N-acetyl-alpha-D-galactosaminyl]-L-threonyl-[protein] + UDP + H(+). It functions in the pathway protein modification; protein glycosylation. Functionally, glycosyltransferase that can synthesize all known mucin beta 6 N-acetylglucosaminides. Mediates core 2 and core 4 O-glycan branching, 2 important steps in mucin-type biosynthesis. Also has I-branching enzyme activity by converting linear into branched poly-N-acetyllactosaminoglycans, leading to introduce the blood group I antigen during embryonic development. This chain is Beta-1,3-galactosyl-O-glycosyl-glycoprotein beta-1,6-N-acetylglucosaminyltransferase 3 (GCNT3), found in Bos mutus grunniens (Wild yak).